We begin with the raw amino-acid sequence, 483 residues long: Protein EFFECTOR OF TRANSCRIPTION 2 (483 aa).

Residues 64–112 (SCPGLYELGVAVIGQEQCRKLEPDIVLASYLGQAESVRSRLQRYGRSGA) form the GIY-YIG domain. 2 Cx9Cx9RCx2HK repeats span residues 278–303 (CGVLLEDGGCCIRSPVKGRKRCIEHK) and 338–363 (CGVILPDMEPCNKRPVPGRKRCEDHK). Residues 380 to 396 (EKTVKDEKPDPESHTES) are compositionally biased toward basic and acidic residues. The disordered stretch occupies residues 380-399 (EKTVKDEKPDPESHTESIEE). Cx9Cx9RCx2HK repeat units lie at residues 406–431 (CEATTKNGLPCTRSSPKGSKRCWQHK) and 453–478 (CGVKLGNGLICERSPVKGRKRCEEHK).

As to expression, expressed in vascular tissues of stems, hypocotyls, leaves and flowers. Expressed in the vascular bundles of xylem in shoot parenchyma cells. Expressed in the remnant cytoplasm of differentiated fiber cells and in protoxylem element of parenchymal cells.

It is found in the cytoplasm. The protein resides in the nucleus. Functionally, transcriptional regulator involved in the regulation of cell differentiation in meristems. Probably regulates the expression of various KNAT genes involved in the maintenance of the cells in an undifferentiated, merismastic state. Plays a role in the regulation of gibberellin 20 oxidase and the gibberellin-regulated protein GASA4. Localizes in the nucleus during the cellular differentiation state and may act via a single strand cutting domain. Transcriptional regulator required for the induction of dormancy during late seed development. Interacts genetically with FUS3 and may be component of the same regulatory pathway during embryogenesis. Binds both linear and supercoiled DNA without sequence preference. This Arabidopsis thaliana (Mouse-ear cress) protein is Protein EFFECTOR OF TRANSCRIPTION 2.